Consider the following 124-residue polypeptide: Sulfur globule protein CV2 (124 aa).

The signal sequence occupies residues 1-22 (MKKLATAAAVAALLGASASASA).

As to quaternary structure, the protein envelope of the sulfur globules is composed of the three different proteins CV1, CV2 and CV3.

Functionally, structural protein of the sulfur globules, which are intracellular globules that serve for sulfur storage in purple sulfur bacteria. The chain is Sulfur globule protein CV2 (sgpB) from Allochromatium vinosum (strain ATCC 17899 / DSM 180 / NBRC 103801 / NCIMB 10441 / D) (Chromatium vinosum).